The sequence spans 982 residues: Glutamate [NMDA] receptor subunit 1 (982 aa).

Positions 1–16 (MAFAVWFLSTFVIVAA) are cleaved as a signal peptide. The Extracellular segment spans residues 17–561 (QRHMALEHEG…TLVSFLQPFS (545 aa)). 7 N-linked (GlcNAc...) asparagine glycosylation sites follow: asparagine 247, asparagine 303, asparagine 334, asparagine 386, asparagine 443, asparagine 470, and asparagine 490. Residues 518–520 (PLT) and arginine 525 contribute to the glycine site. Residues 562–582 (NTLWILVMVSVHVVALVLYLL) form a helical membrane-spanning segment. Residues 583–639 (DRFSPFGRFKLSHSDSNEEKALNLSSAVWFAWGVLLNSGIGEGTPRSFSARVLGMVW) are Cytoplasmic-facing. Residues 640–660 (AGFAMIIVASYTANLAAFLVL) form a helical membrane-spanning segment. Over 661-819 (ERPKTKLSGI…KTPNTLGLKN (159 aa)) the chain is Extracellular. Asparagine 681 carries an N-linked (GlcNAc...) asparagine glycan. 2 residues coordinate glycine: serine 691 and aspartate 735. A helical membrane pass occupies residues 820-840 (MAGVFILVGVGIAGGVGLIII). Residues 841–982 (EVIYKKHQVK…YTSDVSHLVV (142 aa)) lie on the Cytoplasmic side of the membrane. The interval 934 to 982 (EIGKPGQSPKVIGGPPHPMLGKTRPQAQQNLLPPRYSPGYTSDVSHLVV) is disordered. The segment covering 972–982 (GYTSDVSHLVV) has biased composition (polar residues).

Belongs to the glutamate-gated ion channel (TC 1.A.10.1) family. In terms of assembly, forms a heteromeric NMDA channel with Nmdar2.

It localises to the cell membrane. It is found in the postsynaptic cell membrane. The protein localises to the postsynaptic density. NMDA receptor subtype of glutamate-gated ion channels with high calcium permeability and voltage-dependent sensitivity to magnesium. Mediated by glycine. This protein plays a key role in synaptic plasticity, synaptogenesis, excitotoxicity, memory acquisition and learning. It mediates neuronal functions in glutamate neurotransmission. Is involved in the cell surface targeting of NMDA receptors. Plays a role in associative learning and in long-term memory consolidation. The chain is Glutamate [NMDA] receptor subunit 1 from Drosophila willistoni (Fruit fly).